A 250-amino-acid chain; its full sequence is Entry-fusion complex associated protein OPG095 (250 aa).

Glycine 2 carries N-myristoyl glycine; by host lipidation. Residues 2–12 (GAAASIQTTVN) form a targeting to MV membrane region. At 2-183 (GAAASIQTTV…IAPRQVAGTG (182 aa)) the chain is on the virion surface side. 3 disulfides stabilise this stretch: cysteine 34/cysteine 57, cysteine 49/cysteine 136, and cysteine 116/cysteine 158. The chain crosses the membrane as a helical span at residues 184–204 (VQFYMIVIGVIILAALFMYYA). Residues 205–250 (KRMLFTSTNDKIKLILANKENVHWTTYMDTFFRTSPMVIATTDMQN) lie on the Intravirion side of the membrane.

Belongs to the orthopoxvirus OPG095 family. As to quaternary structure, component of the entry fusion complex (EFC) composed of OPG053, OPG076, OPG086, OPG094, OPG095, OPG099, OPG107, OPG143, OPG104, OPG147 and OPG155. Except for OPG095 and OPG053, each of the EFC proteins is required for assembly or stability of the complex. Myristoylated. Post-translationally, disulfid bonds are oxidized in the cytoplasm by OPG088 protein. In terms of processing, unglycosylated because produced in viral factories instead of the classic ER -Golgi route.

It localises to the virion membrane. Functionally, component of the entry fusion complex (EFC), which consists of 11 proteins. During cell infection, this complex mediates entry of the virion core into the host cytoplasm by a two-step mechanism consisting of lipid mixing of the viral and cellular membranes and subsequent pore formation. The sequence is that of Entry-fusion complex associated protein OPG095 (OPG099) from Homo sapiens (Human).